The sequence spans 350 residues: Geranylgeranyl diphosphate synthase (350 aa).

The isopentenyl diphosphate site is built by Lys-70, Arg-73, and His-102. Mg(2+) contacts are provided by Asp-109 and Asp-113. Residues 109–113 carry the DDXXD motif motif; sequence DDVMD. Arg-119 contacts isopentenyl diphosphate. The DDXXD motif signature appears at 240-244; sequence DDLIG.

Belongs to the FPP/GGPP synthase family. It depends on Mg(2+) as a cofactor.

The enzyme catalyses isopentenyl diphosphate + (2E,6E)-farnesyl diphosphate = (2E,6E,10E)-geranylgeranyl diphosphate + diphosphate. The protein operates within isoprenoid biosynthesis; geranylgeranyl diphosphate biosynthesis; geranylgeranyl diphosphate from farnesyl diphosphate and isopentenyl diphosphate: step 1/1. In terms of biological role, catalyzes the condensation of isopentenyl pyrophosphate (IPP) with (2E,6E)-farnesyl diphosphate (E,E-FPP) to yield geranylgeranyl diphosphate (GGPP). This chain is Geranylgeranyl diphosphate synthase, found in Mycobacterium tuberculosis (strain ATCC 25618 / H37Rv).